Consider the following 377-residue polypeptide: Protein RecA (377 aa).

ATP is bound at residue 76 to 83; that stretch reads GPESSGKT.

The protein belongs to the RecA family.

Its subcellular location is the cytoplasm. Its function is as follows. Can catalyze the hydrolysis of ATP in the presence of single-stranded DNA, the ATP-dependent uptake of single-stranded DNA by duplex DNA, and the ATP-dependent hybridization of homologous single-stranded DNAs. It interacts with LexA causing its activation and leading to its autocatalytic cleavage. The polypeptide is Protein RecA (Corynebacterium aurimucosum (strain ATCC 700975 / DSM 44827 / CIP 107346 / CN-1) (Corynebacterium nigricans)).